The primary structure comprises 121 residues: Putative iron-sulfur cluster insertion protein ErpA (121 aa).

Cysteine 49, cysteine 113, and cysteine 115 together coordinate iron-sulfur cluster.

This sequence belongs to the HesB/IscA family. In terms of assembly, homodimer. Requires iron-sulfur cluster as cofactor.

Its function is as follows. Required for insertion of 4Fe-4S clusters. In Verminephrobacter eiseniae (strain EF01-2), this protein is Putative iron-sulfur cluster insertion protein ErpA.